The sequence spans 180 residues: MALRPAKIDRYVDKPAYTRREYIRGAPGPRITIFDMGNPAGDFEFEVSLHTAEPVQIRQNALEAARTQLNRYLSKNVGRSNFHYKIRVYPFQVLRENPMATGRKADRYGNGMRRPFGKPIGLAARLKKDQKILTVRVNKQHLKFALAAMKRASMKFPCKCYYRIYDKEGNDITTKVLSTL.

Belongs to the universal ribosomal protein uL16 family.

The sequence is that of Large ribosomal subunit protein uL16 from Thermococcus sibiricus (strain DSM 12597 / MM 739).